A 228-amino-acid polypeptide reads, in one-letter code: uncharacterized protein (228 aa).

Residues 1-16 (MILLLLALISATTAFQ) form the signal peptide. The chain crosses the membrane as a helical span at residues 206–225 (LFQTLFFVTLSFLVGSAFAL).

To A.fulgidus AF_1225.

The protein resides in the membrane. This is an uncharacterized protein from Archaeoglobus fulgidus (strain ATCC 49558 / DSM 4304 / JCM 9628 / NBRC 100126 / VC-16).